The sequence spans 282 residues: Probable endonuclease 4 (282 aa).

Zn(2+) contacts are provided by H69, H109, E145, D179, H182, H216, D229, H231, and E261.

Belongs to the AP endonuclease 2 family. Zn(2+) serves as cofactor.

It carries out the reaction Endonucleolytic cleavage to 5'-phosphooligonucleotide end-products.. Functionally, endonuclease IV plays a role in DNA repair. It cleaves phosphodiester bonds at apurinic or apyrimidinic (AP) sites, generating a 3'-hydroxyl group and a 5'-terminal sugar phosphate. The sequence is that of Probable endonuclease 4 from Chlorobium chlorochromatii (strain CaD3).